A 185-amino-acid chain; its full sequence is Thiol:disulfide interchange protein DsbE (185 aa).

Topologically, residues 1 to 4 (MKRN) are cytoplasmic. A helical membrane pass occupies residues 5 to 25 (VLLLPLLIFLLIAAALLWQLA). Topologically, residues 26–185 (RNAQGDDPTN…WDRYSREAAQ (160 aa)) are periplasmic. Positions 39–177 (ALTGKPVPAF…WESELKPLWD (139 aa)) constitute a Thioredoxin domain. A disulfide bond links cysteine 80 and cysteine 83.

It belongs to the thioredoxin family. DsbE subfamily.

It is found in the cell inner membrane. Its function is as follows. Involved in disulfide bond formation. Catalyzes a late, reductive step in the assembly of periplasmic c-type cytochromes, probably the reduction of disulfide bonds of the apocytochrome c to allow covalent linkage with the heme. Possible subunit of a heme lyase. The polypeptide is Thiol:disulfide interchange protein DsbE (dsbE1) (Salmonella typhimurium (strain LT2 / SGSC1412 / ATCC 700720)).